The chain runs to 171 residues: Shikimate kinase (171 aa).

14 to 19 (GAGKST) serves as a coordination point for ATP. S18 lines the Mg(2+) pocket. Positions 36, 60, and 82 each coordinate substrate. Residue R120 coordinates ATP. Substrate is bound at residue R139. Q156 contacts ATP.

Belongs to the shikimate kinase family. Monomer. Mg(2+) serves as cofactor.

The protein resides in the cytoplasm. The catalysed reaction is shikimate + ATP = 3-phosphoshikimate + ADP + H(+). It functions in the pathway metabolic intermediate biosynthesis; chorismate biosynthesis; chorismate from D-erythrose 4-phosphate and phosphoenolpyruvate: step 5/7. In terms of biological role, catalyzes the specific phosphorylation of the 3-hydroxyl group of shikimic acid using ATP as a cosubstrate. This is Shikimate kinase from Shewanella putrefaciens (strain CN-32 / ATCC BAA-453).